A 466-amino-acid chain; its full sequence is Soluble pyridine nucleotide transhydrogenase (466 aa).

36 to 45 (ERYNNVGGGC) contacts FAD.

It belongs to the class-I pyridine nucleotide-disulfide oxidoreductase family. FAD serves as cofactor.

It localises to the cytoplasm. It catalyses the reaction NAD(+) + NADPH = NADH + NADP(+). Functionally, conversion of NADPH, generated by peripheral catabolic pathways, to NADH, which can enter the respiratory chain for energy generation. This is Soluble pyridine nucleotide transhydrogenase from Yersinia enterocolitica serotype O:8 / biotype 1B (strain NCTC 13174 / 8081).